The sequence spans 191 residues: Calcium-activated potassium channel subunit beta-1 (191 aa).

At 1–15 (MGKKLVMAQKRGETR) the chain is on the cytoplasmic side. The chain crosses the membrane as a helical span at residues 16–36 (ALCLGVAMVMCAVIAYYILGT). Residues 37-157 (TMLPLYQKSV…YRRLYGPQTL (121 aa)) lie on the Extracellular side of the membrane. N-linked (GlcNAc...) asparagine glycans are attached at residues N80 and N142. The helical transmembrane segment at 158 to 178 (LFSLFWPTFLLTGGLLIIAMV) threads the bilayer. Residues 179 to 191 (KINQSLSILAAQR) lie on the Cytoplasmic side of the membrane.

The protein belongs to the KCNMB (TC 8.A.14.1) family. KCNMB1 subfamily. Interacts with KCNMA1 tetramer. There are probably 4 molecules of KCMNB1 per KCNMA1 tetramer. In terms of processing, N-glycosylated.

Its subcellular location is the membrane. Functionally, regulatory subunit of the calcium activated potassium KCNMA1 (maxiK) channel. Modulates the calcium sensitivity and gating kinetics of KCNMA1, thereby contributing to KCNMA1 channel diversity. Increases the apparent Ca(2+)/voltage sensitivity of the KCNMA1 channel. It also modifies KCNMA1 channel kinetics and alters its pharmacological properties. It slows down the activation and the deactivation kinetics of the channel. Acts as a negative regulator of smooth muscle contraction by enhancing the calcium sensitivity to KCNMA1. Its presence is also a requirement for internal binding of the KCNMA1 channel opener dehydrosoyasaponin I (DHS-1) triterpene glycoside and for external binding of the agonist hormone 17-beta-estradiol (E2). Increases the binding activity of charybdotoxin (CTX) toxin to KCNMA1 peptide blocker by increasing the CTX association rate and decreasing the dissociation rate. This chain is Calcium-activated potassium channel subunit beta-1 (KCNMB1), found in Canis lupus familiaris (Dog).